Consider the following 370-residue polypeptide: ATP synthase gamma chain, chloroplastic (370 aa).

The N-terminal 55 residues, 1-55 (MKFFCVAGLLASAAAFQAQPAAFTTYSPAVGGATSNVFSESSSPAHRNRRATIVM), are a transit peptide targeting the chloroplast. Residue Cys145 is part of the active site.

The protein belongs to the ATPase gamma chain family. As to quaternary structure, F-type ATPases have 2 components, CF(1) - the catalytic core - and CF(0) - the membrane proton channel. CF(1) has five subunits: alpha(3), beta(3), gamma(1), delta(1), epsilon(1). CF(0) has four main subunits: a, b, b' and c.

It is found in the plastid. The protein localises to the chloroplast thylakoid membrane. Its function is as follows. Produces ATP from ADP in the presence of a proton gradient across the membrane. The gamma chain is believed to be important in regulating ATPase activity and the flow of protons through the CF(0) complex. This chain is ATP synthase gamma chain, chloroplastic (ATPC), found in Trieres chinensis (Marine centric diatom).